The following is a 462-amino-acid chain: Nitrogenase iron-iron protein beta chain (462 aa).

The [8Fe-7S] cluster site is built by Cys20, Cys45, Cys104, and Ser143.

Belongs to the NifD/NifK/NifE/NifN family. In terms of assembly, hexamer of two alpha, two beta, and two delta chains. [8Fe-7S] cluster is required as a cofactor.

The catalysed reaction is N2 + 8 reduced [2Fe-2S]-[ferredoxin] + 16 ATP + 16 H2O = H2 + 8 oxidized [2Fe-2S]-[ferredoxin] + 2 NH4(+) + 16 ADP + 16 phosphate + 6 H(+). Its function is as follows. This iron-iron protein is part of the nitrogenase complex that catalyzes the key enzymatic reactions in nitrogen fixation. Other nitrogenase complexes utilize a molybdenum-iron protein or a vanadium-iron protein. The polypeptide is Nitrogenase iron-iron protein beta chain (anfK) (Azotobacter vinelandii).